A 90-amino-acid polypeptide reads, in one-letter code: Bombyxin B-9 (90 aa).

Positions 1–20 (MMKTAVMFILVVVISLTYSS) are cleaved as a signal peptide. Cystine bridges form between cysteine 30–cysteine 75, cysteine 42–cysteine 88, and cysteine 74–cysteine 79. Residues 49-64 (GGAQYAPYWQETYLRS) constitute a propeptide, c peptide like.

It belongs to the insulin family. Heterodimer of a B chain and an A chain linked by two disulfide bonds.

The protein resides in the secreted. Functionally, brain peptide responsible for activation of prothoracic glands to produce ecdysone in insects. The polypeptide is Bombyxin B-9 (BBXB9) (Bombyx mori (Silk moth)).